The following is a 138-amino-acid chain: Small ribosomal subunit protein bS6 (138 aa).

A compositionally biased stretch (basic and acidic residues) spans 97–121 (TEQSEMLKAEENRSERRERRDRPDN). Residues 97-138 (TEQSEMLKAEENRSERRERRDRPDNTDGSNENDSDSDNNADE) form a disordered region. Acidic residues predominate over residues 126–138 (NENDSDSDNNADE).

The protein belongs to the bacterial ribosomal protein bS6 family.

In terms of biological role, binds together with bS18 to 16S ribosomal RNA. The polypeptide is Small ribosomal subunit protein bS6 (Stutzerimonas stutzeri (strain A1501) (Pseudomonas stutzeri)).